Reading from the N-terminus, the 318-residue chain is Melanoma-associated antigen 8 (318 aa).

The interval 1 to 103 (MLLGQKSQRY…GPSTSPDPAH (103 aa)) is disordered. In terms of domain architecture, MAGE spans 112 to 311 (LDEKVAELVR…ISYPSLHEEA (200 aa)).

As to expression, expressed in many tumors of several types, such as melanoma, head and neck squamous cell carcinoma, lung carcinoma and breast carcinoma, but not in normal tissues except for testis and placenta.

Functionally, not known, though may play a role in embryonal development and tumor transformation or aspects of tumor progression. The protein is Melanoma-associated antigen 8 (MAGEA8) of Homo sapiens (Human).